The primary structure comprises 352 residues: Protein YpbB (352 aa).

Interacts with RecS and SSB (ssbA); the 6 C-terminal residues of SSB are required for interaction with YpbB.

The protein resides in the cytoplasm. Its subcellular location is the nucleoid. The polypeptide is Protein YpbB (ypbB) (Bacillus subtilis (strain 168)).